We begin with the raw amino-acid sequence, 542 residues long: Homeobox protein ceh-18 (542 aa).

Positions 243 to 252 are enriched in polar residues; it reads NTPTQPTASL. Residues 243–264 form a disordered region; that stretch reads NTPTQPTASLTPKKAENRPPVV. In terms of domain architecture, POU-specific spans 290 to 364; the sequence is DDRIDMNELE…LLKEWLADVE (75 aa). The homeobox DNA-binding region spans 421–480; the sequence is RRRKRTNLDMNQRNALDTFFALNPRPDHDKMTDIANSLELDRDVVRVWFCNRRQKMRRVD. The segment at 514–542 is disordered; sequence LASCQASNDDSDGTSGSPDAPSNDGCSDL. A compositionally biased stretch (polar residues) spans 517-530; sequence CQASNDDSDGTSGS.

Belongs to the POU transcription factor family. As to quaternary structure, interacts with akir-1. In terms of tissue distribution, expressed in the gonadal sheath cells that signal the oocyte, but not in the oocyte.

It localises to the nucleus. In terms of biological role, directs gonadal sheath cell differentiation and function. Also directs gonad migration and plays a role in specifying the differentiated phenotypes of epidermal cells during postembryonic development. Plays a role in oogenesis, regulating a sheath cell signal that causes oocytes to maintain diakinesis arrest during meiosis. Negatively regulates oocyte maturation, ovulation and MAPK activation in oocytes when sperm are not available for fertilization. May be recruited by akir-1 to the promoter regions of antimicrobial peptide genes to control gene expression in response to fungal infection. The chain is Homeobox protein ceh-18 from Caenorhabditis elegans.